The sequence spans 120 residues: MSNKTKLIQQIEAEQMTKEVPAFGPGDTIVVQVKVKEGSRERLQAYEGIVISKRNRGLNSAFTVRKISSGIGVERAFQTYSPLVESIEVKRRGDVRQAKIYYLRERSGKSARIKEKLAKR.

It belongs to the bacterial ribosomal protein bL19 family.

This protein is located at the 30S-50S ribosomal subunit interface and may play a role in the structure and function of the aminoacyl-tRNA binding site. The chain is Large ribosomal subunit protein bL19 from Marinomonas sp. (strain MWYL1).